Reading from the N-terminus, the 374-residue chain is Protein TAB2 homolog, chloroplastic (374 aa).

Residues 1–64 (MATLGFNTRR…SLSITKEQEV (64 aa)) constitute a chloroplast transit peptide. A disordered region spans residues 58–84 (ITKEQEVANEVEEDDPTSELSYLDPES). The segment covering 64 to 74 (VANEVEEDDPT) has biased composition (acidic residues).

The protein resides in the plastid. It localises to the chloroplast. Functionally, nuclear genome-encoded A/U-rich RNA-binding protein involved in the biogenesis of photosystem I (PSI) and II (PSII). Required for the light-controlled accumulation of PSI and PSII during early plant development. Does not seem to be required for the translation of mRNAs of the PSI subunits. This Arabidopsis thaliana (Mouse-ear cress) protein is Protein TAB2 homolog, chloroplastic.